The sequence spans 627 residues: Carene synthase, chloroplastic (627 aa).

The transit peptide at 1 to 36 directs the protein to the chloroplast; that stretch reads MSVISIMPLASKPCLNKSFISSTHEPKALRRPISTV. Asp378, Asp382, and Asp530 together coordinate Mg(2+). Positions 378–382 match the DDXXD motif motif; sequence DDMYD.

This sequence belongs to the terpene synthase family. Tpsd subfamily. Requires Mg(2+) as cofactor. The cofactor is Mn(2+).

The protein localises to the plastid. It is found in the chloroplast. It catalyses the reaction (2E)-geranyl diphosphate = (+)-car-3-ene + diphosphate. Its pathway is terpene metabolism; oleoresin biosynthesis. In terms of biological role, terpene synthase (TPS) involved in defensive oleoresin formation in conifers in response to insect attack or other injury. The sequence is that of Carene synthase, chloroplastic (3CAR) from Picea glauca (White spruce).